Consider the following 351-residue polypeptide: Molybdenum import ATP-binding protein ModC (351 aa).

The ABC transporter domain occupies 1–229 (MLQINVKKQL…PIFAPWKGES (229 aa)). 31–38 (GLSGSGKT) serves as a coordination point for ATP. The region spanning 289 to 351 (QTSIRNILRG…YVQIKAVSVM (63 aa)) is the Mop domain.

The protein belongs to the ABC transporter superfamily. Molybdate importer (TC 3.A.1.8) family. As to quaternary structure, the complex is composed of two ATP-binding proteins (ModC), two transmembrane proteins (ModB) and a solute-binding protein (ModA).

It localises to the cell inner membrane. It carries out the reaction molybdate(out) + ATP + H2O = molybdate(in) + ADP + phosphate + H(+). Functionally, part of the ABC transporter complex ModABC involved in molybdenum import. Responsible for energy coupling to the transport system. In Haemophilus influenzae (strain ATCC 51907 / DSM 11121 / KW20 / Rd), this protein is Molybdenum import ATP-binding protein ModC.